We begin with the raw amino-acid sequence, 244 residues long: Lipoprotein-releasing system ATP-binding protein LolD (244 aa).

The 226-residue stretch at 19 to 244 (IRAEALAKTY…KLRELAPSAV (226 aa)) folds into the ABC transporter domain. 55–62 (GASGAGKS) provides a ligand contact to ATP.

This sequence belongs to the ABC transporter superfamily. Lipoprotein translocase (TC 3.A.1.125) family. The complex is composed of two ATP-binding proteins (LolD) and two transmembrane proteins (LolC and LolE).

The protein localises to the cell inner membrane. Its function is as follows. Part of the ABC transporter complex LolCDE involved in the translocation of mature outer membrane-directed lipoproteins, from the inner membrane to the periplasmic chaperone, LolA. Responsible for the formation of the LolA-lipoprotein complex in an ATP-dependent manner. In Xanthomonas axonopodis pv. citri (strain 306), this protein is Lipoprotein-releasing system ATP-binding protein LolD.